Consider the following 194-residue polypeptide: Xanthine phosphoribosyltransferase (194 aa).

2 residues coordinate xanthine: Leu-20 and Asn-27. 128–132 (ANGQA) is a binding site for 5-phospho-alpha-D-ribose 1-diphosphate. Residue Lys-156 coordinates xanthine.

The protein belongs to the purine/pyrimidine phosphoribosyltransferase family. Xpt subfamily. In terms of assembly, homodimer.

The protein localises to the cytoplasm. It carries out the reaction XMP + diphosphate = xanthine + 5-phospho-alpha-D-ribose 1-diphosphate. The protein operates within purine metabolism; XMP biosynthesis via salvage pathway; XMP from xanthine: step 1/1. Converts the preformed base xanthine, a product of nucleic acid breakdown, to xanthosine 5'-monophosphate (XMP), so it can be reused for RNA or DNA synthesis. The sequence is that of Xanthine phosphoribosyltransferase from Bacillus licheniformis (strain ATCC 14580 / DSM 13 / JCM 2505 / CCUG 7422 / NBRC 12200 / NCIMB 9375 / NCTC 10341 / NRRL NRS-1264 / Gibson 46).